We begin with the raw amino-acid sequence, 121 residues long: Small ribosomal subunit protein uS13 (121 aa).

Positions 91–121 (HRMSLPVRGQRTRTNARTRRGSRKTVAGRKK) are disordered. The segment covering 100–121 (QRTRTNARTRRGSRKTVAGRKK) has biased composition (basic residues).

Belongs to the universal ribosomal protein uS13 family. In terms of assembly, part of the 30S ribosomal subunit. Forms a loose heterodimer with protein S19. Forms two bridges to the 50S subunit in the 70S ribosome.

Its function is as follows. Located at the top of the head of the 30S subunit, it contacts several helices of the 16S rRNA. In the 70S ribosome it contacts the 23S rRNA (bridge B1a) and protein L5 of the 50S subunit (bridge B1b), connecting the 2 subunits; these bridges are implicated in subunit movement. Contacts the tRNAs in the A and P-sites. In Prochlorococcus marinus (strain AS9601), this protein is Small ribosomal subunit protein uS13.